The chain runs to 266 residues: N-formylglutamate deformylase (266 aa).

It belongs to the N-formylglutamate deformylase family. Monomer.

The catalysed reaction is N-formyl-L-glutamate + H2O = formate + L-glutamate. Its pathway is amino-acid degradation; L-histidine degradation into L-glutamate; L-glutamate from N-formimidoyl-L-glutamate (deiminase route): step 2/2. Functionally, catalyzes the hydrolysis of N-formyl-L-glutamate to formate and L-glutamate. Shows weak activity with N-formyl-L-glutamine. The protein is N-formylglutamate deformylase of Pseudomonas aeruginosa (strain ATCC 15692 / DSM 22644 / CIP 104116 / JCM 14847 / LMG 12228 / 1C / PRS 101 / PAO1).